Consider the following 308-residue polypeptide: Carbonic anhydrase 6 (308 aa).

A signal peptide spans 1–17; it reads MRALVLLLSLFLLGGQA. The Alpha-carbonic anhydrase domain occupies 21-278; it reads SDWTYSEGAL…LNHRVVESNF (258 aa). A disulfide bridge links cysteine 42 with cysteine 224. The N-linked (GlcNAc...) asparagine glycan is linked to asparagine 67. The active-site Proton donor/acceptor is the histidine 85. Zn(2+)-binding residues include histidine 111, histidine 113, and histidine 138. 220–221 lines the substrate pocket; sequence TT. An N-linked (GlcNAc...) asparagine glycan is attached at asparagine 256.

The protein belongs to the alpha-carbonic anhydrase family. It depends on Zn(2+) as a cofactor. In terms of tissue distribution, major constituent of saliva.

Its subcellular location is the secreted. It carries out the reaction hydrogencarbonate + H(+) = CO2 + H2O. Its activity is regulated as follows. Inhibited by coumarins, sulfonamide derivatives such as acetazolamide (AZA), saccharin and Foscarnet (phosphonoformate trisodium salt). Its function is as follows. Reversible hydration of carbon dioxide. Its role in saliva is unknown. This Homo sapiens (Human) protein is Carbonic anhydrase 6 (CA6).